Reading from the N-terminus, the 120-residue chain is NAD(P)H-quinone oxidoreductase subunit 3, chloroplastic (120 aa).

3 consecutive transmembrane segments (helical) span residues 7 to 27 (YNYFWIFLLIASLIPTIAFSI), 64 to 84 (MFALVFVIFDVETVFLYPWAM), and 89 to 109 (LGIPAFIEVFIFVFILIIGLI).

The protein belongs to the complex I subunit 3 family. In terms of assembly, NDH is composed of at least 16 different subunits, 5 of which are encoded in the nucleus.

It localises to the plastid. The protein resides in the chloroplast thylakoid membrane. It catalyses the reaction a plastoquinone + NADH + (n+1) H(+)(in) = a plastoquinol + NAD(+) + n H(+)(out). The catalysed reaction is a plastoquinone + NADPH + (n+1) H(+)(in) = a plastoquinol + NADP(+) + n H(+)(out). Functionally, NDH shuttles electrons from NAD(P)H:plastoquinone, via FMN and iron-sulfur (Fe-S) centers, to quinones in the photosynthetic chain and possibly in a chloroplast respiratory chain. The immediate electron acceptor for the enzyme in this species is believed to be plastoquinone. Couples the redox reaction to proton translocation, and thus conserves the redox energy in a proton gradient. The polypeptide is NAD(P)H-quinone oxidoreductase subunit 3, chloroplastic (Anthoceros angustus (Hornwort)).